A 122-amino-acid polypeptide reads, in one-letter code: Large ribosomal subunit protein uL14 (122 aa).

It belongs to the universal ribosomal protein uL14 family. Part of the 50S ribosomal subunit. Forms a cluster with proteins L3 and L19. In the 70S ribosome, L14 and L19 interact and together make contacts with the 16S rRNA in bridges B5 and B8.

Its function is as follows. Binds to 23S rRNA. Forms part of two intersubunit bridges in the 70S ribosome. The polypeptide is Large ribosomal subunit protein uL14 (Baumannia cicadellinicola subsp. Homalodisca coagulata).